Reading from the N-terminus, the 962-residue chain is Leucine--tRNA ligase (962 aa).

A 'HIGH' region motif is present at residues 68-79; that stretch reads PYPSGAGLHVGH. The disordered stretch occupies residues 559-582; the sequence is DYSPRTFDPDDANTSPETPLSRNE. Over residues 570-579 the composition is skewed to polar residues; it reads ANTSPETPLS. A 'KMSKS' region motif is present at residues 733–737; sequence KMGKS. Lysine 736 is a binding site for ATP.

It belongs to the class-I aminoacyl-tRNA synthetase family.

It is found in the cytoplasm. The catalysed reaction is tRNA(Leu) + L-leucine + ATP = L-leucyl-tRNA(Leu) + AMP + diphosphate. The sequence is that of Leucine--tRNA ligase from Streptomyces avermitilis (strain ATCC 31267 / DSM 46492 / JCM 5070 / NBRC 14893 / NCIMB 12804 / NRRL 8165 / MA-4680).